A 1636-amino-acid chain; its full sequence is Tyrosine-protein phosphatase non-receptor type 23 (1636 aa).

The region spanning 8–394 (PMIWLDLKEA…AKIEDKNEVL (387 aa)) is the BRO1 domain. TPR repeat units lie at residues 250–283 (AVAH…LNEA) and 374–407 (EEKA…DPET). A coiled-coil region spans residues 550–623 (KAVLQNLKRI…VYLEQNLAAQ (74 aa)). Residues 701 to 714 (EAARQQLLDRELKK) show a composition bias toward basic and acidic residues. Disordered regions lie at residues 701-812 (EAAR…GPHA) and 888-1151 (QAPI…AAEG). Ser733 carries the phosphoserine modification. The segment at 770 to 1130 (HFPPSPFPSS…SSSPESQHGG (361 aa)) is his. Composition is skewed to pro residues over residues 898-922 (RPNP…PTPY) and 950-962 (RIGP…PQPH). Residue Arg950 is modified to Omega-N-methylarginine. 6 tandem repeats follow at residues 953–954 (PQ), 955–956 (PQ), 957–958 (PH), 959–960 (PQ), 961–962 (PH), and 963–964 (PS). The tract at residues 953–964 (PQPQPHPQPHPS) is 6 X 2 AA approximate tandem repeats of P-Q. 3 stretches are compositionally biased toward pro residues: residues 983-1002 (LFPP…PYAP), 1036-1050 (FPSP…PPLA), and 1083-1109 (HLVP…PPPC). Over residues 1120-1131 (LSSSPESQHGGT) the composition is skewed to polar residues. Phosphoserine occurs at positions 1122 and 1123. At Thr1131 the chain carries Phosphothreonine. The Tyrosine-protein phosphatase domain occupies 1192-1452 (DTVWRELQDA…RFCYEAVVRH (261 aa)). The active-site Phosphocysteine intermediate is the Cys1392. Residues 1513 to 1636 (LESPVASLPG…LDPLWTLNKT (124 aa)) are disordered. 2 stretches are compositionally biased toward pro residues: residues 1523-1533 (PAEPPGLPPAS) and 1542-1556 (SSSP…PEAP). The span at 1567 to 1587 (APSSGPPSSSLELLASLTPEA) shows a compositional bias: low complexity. Position 1615 is an omega-N-methylarginine (Arg1615).

Belongs to the protein-tyrosine phosphatase family. Non-receptor class subfamily. As to quaternary structure, interacts with GRAP2 and GRB2. Interacts with UBAP1. Interacts with CHMP4B.

The protein localises to the nucleus. The protein resides in the cytoplasm. Its subcellular location is the cytoplasmic vesicle. It is found in the endosome. It localises to the cytoskeleton. The protein localises to the cilium basal body. The protein resides in the early endosome. The enzyme catalyses O-phospho-L-tyrosyl-[protein] + H2O = L-tyrosyl-[protein] + phosphate. In terms of biological role, plays a role in sorting of endocytic ubiquitinated cargos into multivesicular bodies (MVBs) via its interaction with the ESCRT-I complex (endosomal sorting complex required for transport I), and possibly also other ESCRT complexes. May act as a negative regulator of Ras-mediated mitogenic activity. Plays a role in ciliogenesis. This chain is Tyrosine-protein phosphatase non-receptor type 23 (PTPN23), found in Homo sapiens (Human).